The sequence spans 331 residues: L-lactate dehydrogenase A chain (331 aa).

NAD(+) contacts are provided by residues 29-57 (GMVG…MEDK) and Arg-98. Substrate contacts are provided by Arg-105, Asn-137, and Arg-168. Residue Asn-137 coordinates NAD(+). His-192 acts as the Proton acceptor in catalysis. Substrate is bound at residue Thr-247.

Belongs to the LDH/MDH superfamily. LDH family. As to quaternary structure, homotetramer.

It localises to the cytoplasm. It carries out the reaction (S)-lactate + NAD(+) = pyruvate + NADH + H(+). Its pathway is fermentation; pyruvate fermentation to lactate; (S)-lactate from pyruvate: step 1/1. Interconverts simultaneously and stereospecifically pyruvate and lactate with concomitant interconversion of NADH and NAD(+). In Dissostichus eleginoides (Patagonian toothfish), this protein is L-lactate dehydrogenase A chain (ldha).